Consider the following 144-residue polypeptide: Arginine decarboxylase proenzyme (144 aa).

Ser-80 (schiff-base intermediate with substrate; via pyruvic acid) is an active-site residue. Ser-80 carries the post-translational modification Pyruvic acid (Ser); by autocatalysis. His-85 serves as the catalytic Proton acceptor; for processing activity. The active-site Proton donor; for catalytic activity is Cys-100.

The protein belongs to the prokaryotic AdoMetDC family. Type 1 subfamily. In terms of assembly, heterooctamer of four alpha and four beta chains arranged as a tetramer of alpha/beta heterodimers. The cofactor is pyruvate. Is synthesized initially as an inactive proenzyme. Formation of the active enzyme involves a self-maturation process in which the active site pyruvoyl group is generated from an internal serine residue via an autocatalytic post-translational modification. Two non-identical subunits are generated from the proenzyme in this reaction, and the pyruvate is formed at the N-terminus of the alpha chain, which is derived from the carboxyl end of the proenzyme. The post-translation cleavage follows an unusual pathway, termed non-hydrolytic serinolysis, in which the side chain hydroxyl group of the serine supplies its oxygen atom to form the C-terminus of the beta chain, while the remainder of the serine residue undergoes an oxidative deamination to produce ammonia and the pyruvoyl group blocking the N-terminus of the alpha chain.

It carries out the reaction L-arginine + H(+) = agmatine + CO2. It functions in the pathway amine and polyamine biosynthesis; agmatine biosynthesis; agmatine from L-arginine: step 1/1. Functionally, specifically catalyzes the decarboxylation of L-arginine to agmatine. Has no S-adenosylmethionine decarboxylase (AdoMetDC) activity. The polypeptide is Arginine decarboxylase proenzyme (Ignicoccus hospitalis (strain KIN4/I / DSM 18386 / JCM 14125)).